The chain runs to 535 residues: Dimethylaniline monooxygenase [N-oxide-forming] 2 (535 aa).

The residue at position 2 (A2) is an N-acetylalanine. Residues G9–S13, E32, L40–W41, and N61–T62 contribute to the FAD site. Residues T60–N61 and S195–D198 contribute to the NADP(+) site. Residue K492 forms a Glycyl lysine isopeptide (Lys-Gly) (interchain with G-Cter in SUMO) linkage. A helical membrane pass occupies residues L510–S530.

This sequence belongs to the FMO family. FAD is required as a cofactor. It depends on Mg(2+) as a cofactor. Lung.

It localises to the microsome membrane. Its subcellular location is the endoplasmic reticulum membrane. In terms of biological role, catalyzes the oxidative metabolism of numerous xenobiotics, including mainly therapeutic drugs and insecticides that contain a soft nucleophile, most commonly nitrogen and sulfur and participates to their bioactivation. This Cavia porcellus (Guinea pig) protein is Dimethylaniline monooxygenase [N-oxide-forming] 2.